The primary structure comprises 425 residues: NAC transcription factor ONAC010 (425 aa).

A compositionally biased stretch (polar residues) spans 1 to 10; the sequence is MESPDSSSGS. Positions 1–34 are disordered; the sequence is MESPDSSSGSAPPRVLRRQQQQPGSAPELPPGFR. A compositionally biased stretch (low complexity) spans 12–23; the sequence is PPRVLRRQQQQP. One can recognise an NAC domain in the interval 29–200; that stretch reads LPPGFRFHPT…DWVLCRIYKK (172 aa). Residues 129–206 mediate DNA binding; sequence VGVKKALVFY…IYKKTNKAGA (78 aa).

The protein localises to the nucleus. Its function is as follows. Transcription factor of the NAC family associated with male fertility. This chain is NAC transcription factor ONAC010 (ONAC010), found in Oryza sativa subsp. indica (Rice).